A 203-amino-acid polypeptide reads, in one-letter code: UPF0637 protein SERP0693 (203 aa).

This sequence belongs to the UPF0637 family.

This Staphylococcus epidermidis (strain ATCC 35984 / DSM 28319 / BCRC 17069 / CCUG 31568 / BM 3577 / RP62A) protein is UPF0637 protein SERP0693.